Reading from the N-terminus, the 346-residue chain is Methionine import ATP-binding protein MetN 1 (346 aa).

The ABC transporter domain maps to 2 to 241; it reads IELKNVSKVF…PQHVTTKKFV (240 aa). 38–45 lines the ATP pocket; the sequence is GYSGAGKS.

The protein belongs to the ABC transporter superfamily. Methionine importer (TC 3.A.1.24) family. In terms of assembly, the complex is composed of two ATP-binding proteins (MetN), two transmembrane proteins (MetI) and a solute-binding protein (MetQ).

The protein localises to the cell membrane. It catalyses the reaction L-methionine(out) + ATP + H2O = L-methionine(in) + ADP + phosphate + H(+). The catalysed reaction is D-methionine(out) + ATP + H2O = D-methionine(in) + ADP + phosphate + H(+). Functionally, part of the ABC transporter complex MetNIQ involved in methionine import. Responsible for energy coupling to the transport system. The protein is Methionine import ATP-binding protein MetN 1 of Bacillus cereus (strain ZK / E33L).